The primary structure comprises 228 residues: uncharacterized protein (228 aa).

The region spanning 99 to 207 (LANKVPFVVC…PKIKVGKPFI (109 aa)) is the tRNA-binding domain.

This is an uncharacterized protein from Mycoplasma genitalium (strain ATCC 33530 / DSM 19775 / NCTC 10195 / G37) (Mycoplasmoides genitalium).